The chain runs to 612 residues: Phragmoplastin DRP1D (612 aa).

The residue at position 1 (methionine 1) is an N-acetylmethionine. The Dynamin-type G domain maps to 32 to 301 (WEALPSVAVV…LESVIRSRIP (270 aa)). A G1 motif region spans residues 42-49 (GGQSSGKS). Residue 45 to 50 (SSGKSS) participates in GTP binding. Positions 68 to 70 (VTR) are G2 motif. Positions 143–146 (DLPG) are G3 motif. The segment at 212–215 (TKLD) is G4 motif. Residues 213–218 (KLDLMD) and 243–246 (NRSQ) each bind GTP. Residues 242 to 245 (VNRS) are G5 motif. A GED domain is found at 520-612 (FRKIASNVAA…DEIDAAVWVR (93 aa)).

It belongs to the TRAFAC class dynamin-like GTPase superfamily. Dynamin/Fzo/YdjA family. Forms homodimer and may homooligomerize and heterooligomerize to form the phragmoplastin complex. Binds to PHIP1.

It localises to the cytoplasm. It is found in the cytoskeleton. The catalysed reaction is GTP + H2O = GDP + phosphate + H(+). In terms of biological role, putative microtubule-associated force-producing protein. Has a GTPase activity. This is Phragmoplastin DRP1D from Arabidopsis thaliana (Mouse-ear cress).